The sequence spans 439 residues: Thymidine phosphorylase (439 aa).

Belongs to the thymidine/pyrimidine-nucleoside phosphorylase family. Homodimer.

The enzyme catalyses thymidine + phosphate = 2-deoxy-alpha-D-ribose 1-phosphate + thymine. It functions in the pathway pyrimidine metabolism; dTMP biosynthesis via salvage pathway; dTMP from thymine: step 1/2. Functionally, the enzymes which catalyze the reversible phosphorolysis of pyrimidine nucleosides are involved in the degradation of these compounds and in their utilization as carbon and energy sources, or in the rescue of pyrimidine bases for nucleotide synthesis. The polypeptide is Thymidine phosphorylase (Mesorhizobium japonicum (strain LMG 29417 / CECT 9101 / MAFF 303099) (Mesorhizobium loti (strain MAFF 303099))).